The primary structure comprises 157 residues: Small ribosomal subunit protein uS7 (157 aa).

The protein belongs to the universal ribosomal protein uS7 family. Part of the 30S ribosomal subunit. Contacts proteins S9 and S11.

Functionally, one of the primary rRNA binding proteins, it binds directly to 16S rRNA where it nucleates assembly of the head domain of the 30S subunit. Is located at the subunit interface close to the decoding center, probably blocks exit of the E-site tRNA. This chain is Small ribosomal subunit protein uS7, found in Variovorax paradoxus (strain S110).